A 344-amino-acid chain; its full sequence is Phenylalanine--tRNA ligase alpha subunit (344 aa).

Mg(2+) is bound at residue E256.

The protein belongs to the class-II aminoacyl-tRNA synthetase family. Phe-tRNA synthetase alpha subunit type 1 subfamily. Tetramer of two alpha and two beta subunits. It depends on Mg(2+) as a cofactor.

Its subcellular location is the cytoplasm. It catalyses the reaction tRNA(Phe) + L-phenylalanine + ATP = L-phenylalanyl-tRNA(Phe) + AMP + diphosphate + H(+). In Bacillus cereus (strain G9842), this protein is Phenylalanine--tRNA ligase alpha subunit.